The chain runs to 739 residues: MSLMLEPNPTQIKEERIYAEMGLTDEEFAMVEKILGRLPNYTETGLFSVMWSEHCSYKNSKPVLRKFPTTGERVLQGPGEGAGIVDIGDNQAVVFKMESHNHPSAIEPYQGAATGVGGIIRDVFSMGARPVALLNSLRFGELQSPRVKYLFEEVVAGIAGYGNCIGIPTVGGEVQFDPCYEGNPLVNAMCVGLINHEDIKKGQAHGAGNTVMYVGASTGRDGIHGATFASEELSESSEAKRPAVQVGDPFMEKLLIEACLELIQSDALVGIQDMGAAGLTSSSAEMASKAGMGIEMYLDDVPQRETGMTPYEMMLSESQERMLIVVKKGREQEIVDLFEKYGLAAVTMGKVTEDKMLRLFHKGEMVAEVPADALAEEAPIYHKPSQEAAYFAEFQQMKMETPKVENYKETLFALLQQPTIASKEWVYDQYDYQVRTSTVVTPGSDAAVVRVRGTEKGLAMTTDCNSRYIYLDPEVGGKIAVAEAARNIVCSGGEPLAITDCLNFGNPEKPEIFWQIEKSVDGMSEACRTLQTPVIGGNVSMYNERSGEAVYPTPTVGMVGLVHDLKHVTTQEFKQAGDLVYVIGETKAEFGGSELQKMLHGKIFGQSPSIDLDVELKRQKQILAAIQAGLVQSAHDVAEGGLAVAISESAIGANGLGATVKLDGEATAALFAESQSRFVITVKRENKEAFEKAVEAIQVGEVTNTNEVTIHNEENEVLLTANVDEMRKAWKGAIPCLLK.

Histidine 54 is an active-site residue. 2 residues coordinate ATP: tyrosine 57 and lysine 96. Mg(2+) is bound at residue glutamate 98. Substrate contacts are provided by residues 99–102 (SHNH) and arginine 121. Histidine 100 serves as the catalytic Proton acceptor. Aspartate 122 contributes to the Mg(2+) binding site. Residue glutamine 245 coordinates substrate. Aspartate 273 provides a ligand contact to Mg(2+). 317–319 (ESQ) provides a ligand contact to substrate. Aspartate 500 and glycine 537 together coordinate ATP. Asparagine 538 provides a ligand contact to Mg(2+). Serine 540 contacts substrate.

It belongs to the FGAMS family. As to quaternary structure, monomer. Part of the FGAM synthase complex composed of 1 PurL, 1 PurQ and 2 PurS subunits.

The protein resides in the cytoplasm. It carries out the reaction N(2)-formyl-N(1)-(5-phospho-beta-D-ribosyl)glycinamide + L-glutamine + ATP + H2O = 2-formamido-N(1)-(5-O-phospho-beta-D-ribosyl)acetamidine + L-glutamate + ADP + phosphate + H(+). The protein operates within purine metabolism; IMP biosynthesis via de novo pathway; 5-amino-1-(5-phospho-D-ribosyl)imidazole from N(2)-formyl-N(1)-(5-phospho-D-ribosyl)glycinamide: step 1/2. In terms of biological role, part of the phosphoribosylformylglycinamidine synthase complex involved in the purines biosynthetic pathway. Catalyzes the ATP-dependent conversion of formylglycinamide ribonucleotide (FGAR) and glutamine to yield formylglycinamidine ribonucleotide (FGAM) and glutamate. The FGAM synthase complex is composed of three subunits. PurQ produces an ammonia molecule by converting glutamine to glutamate. PurL transfers the ammonia molecule to FGAR to form FGAM in an ATP-dependent manner. PurS interacts with PurQ and PurL and is thought to assist in the transfer of the ammonia molecule from PurQ to PurL. This chain is Phosphoribosylformylglycinamidine synthase subunit PurL, found in Bacillus cereus (strain Q1).